A 587-amino-acid polypeptide reads, in one-letter code: Probable phosphoribomutase (587 aa).

Residues Thr49, Arg53, and 149-150 (SH) each bind substrate. Ser149 serves as the catalytic Phosphoserine intermediate. Positions 149, 306, 308, and 310 each coordinate Mg(2+). Ser149 carries the phosphoserine modification. Residues 310-311 (DR), Thr380, 404-406 (EEA), and Lys418 contribute to the substrate site.

This sequence belongs to the phosphohexose mutase family. Requires Mg(2+) as cofactor.

It is found in the cytoplasm. The protein localises to the nucleus. The catalysed reaction is alpha-D-ribose 1-phosphate = D-ribose 5-phosphate. In terms of biological role, converts ribose 1-phosphate to ribose 5-phosphate. Involved in ribose salvage via the pentose phosphate pathway. In Schizosaccharomyces pombe (strain 972 / ATCC 24843) (Fission yeast), this protein is Probable phosphoribomutase.